We begin with the raw amino-acid sequence, 174 residues long: Adenine phosphoribosyltransferase (174 aa).

This sequence belongs to the purine/pyrimidine phosphoribosyltransferase family. Homodimer.

Its subcellular location is the cytoplasm. It catalyses the reaction AMP + diphosphate = 5-phospho-alpha-D-ribose 1-diphosphate + adenine. It functions in the pathway purine metabolism; AMP biosynthesis via salvage pathway; AMP from adenine: step 1/1. Catalyzes a salvage reaction resulting in the formation of AMP, that is energically less costly than de novo synthesis. The protein is Adenine phosphoribosyltransferase of Mycobacterium sp. (strain JLS).